A 343-amino-acid chain; its full sequence is Putative dihydroflavonol 4-reductase (343 aa).

Tyr-150 provides a ligand contact to NADP(+).

This sequence belongs to the NAD(P)-dependent epimerase/dehydratase family. Dihydroflavonol-4-reductase subfamily.

The enzyme catalyses a (2R,3S,4S)-leucoanthocyanidin + NADP(+) = a (2R,3R)-dihydroflavonol + NADPH + H(+). It participates in secondary metabolite biosynthesis; flavonoid biosynthesis. This chain is Putative dihydroflavonol 4-reductase (dfrA), found in Synechocystis sp. (strain ATCC 27184 / PCC 6803 / Kazusa).